Here is a 256-residue protein sequence, read N- to C-terminus: DNA repair protein RecO (256 aa).

It belongs to the RecO family.

In terms of biological role, involved in DNA repair and RecF pathway recombination. The protein is DNA repair protein RecO of Rhizobium johnstonii (strain DSM 114642 / LMG 32736 / 3841) (Rhizobium leguminosarum bv. viciae).